A 456-amino-acid chain; its full sequence is Outer membrane protein assembly factor BamB (456 aa).

The N-terminal stretch at 1 to 19 (MKKLLFITAPLLLSVLTAS) is a signal peptide. C20 is lipidated: N-palmitoyl cysteine. C20 carries the S-diacylglycerol cysteine lipid modification.

It belongs to the BamB family. In terms of assembly, part of the Bam complex.

The protein localises to the cell outer membrane. In terms of biological role, part of the outer membrane protein assembly complex, which is involved in assembly and insertion of beta-barrel proteins into the outer membrane. The protein is Outer membrane protein assembly factor BamB of Francisella tularensis subsp. tularensis (strain SCHU S4 / Schu 4).